A 117-amino-acid polypeptide reads, in one-letter code: Large ribosomal subunit protein bL20c (117 aa).

This sequence belongs to the bacterial ribosomal protein bL20 family.

The protein localises to the plastid. Its subcellular location is the chloroplast. Binds directly to 23S ribosomal RNA and is necessary for the in vitro assembly process of the 50S ribosomal subunit. It is not involved in the protein synthesizing functions of that subunit. This Chloranthus spicatus (Chulantree) protein is Large ribosomal subunit protein bL20c.